The chain runs to 232 residues: 5'-methylthioadenosine/S-adenosylhomocysteine nucleosidase (232 aa).

The active-site Proton acceptor is Glu-14. Substrate is bound by residues Gly-80, Val-154, and Met-175–Glu-176. Residue Asp-199 is the Proton donor of the active site.

It belongs to the PNP/UDP phosphorylase family. MtnN subfamily.

It carries out the reaction S-adenosyl-L-homocysteine + H2O = S-(5-deoxy-D-ribos-5-yl)-L-homocysteine + adenine. The enzyme catalyses S-methyl-5'-thioadenosine + H2O = 5-(methylsulfanyl)-D-ribose + adenine. The catalysed reaction is 5'-deoxyadenosine + H2O = 5-deoxy-D-ribose + adenine. It participates in amino-acid biosynthesis; L-methionine biosynthesis via salvage pathway; S-methyl-5-thio-alpha-D-ribose 1-phosphate from S-methyl-5'-thioadenosine (hydrolase route): step 1/2. Catalyzes the irreversible cleavage of the glycosidic bond in both 5'-methylthioadenosine (MTA) and S-adenosylhomocysteine (SAH/AdoHcy) to adenine and the corresponding thioribose, 5'-methylthioribose and S-ribosylhomocysteine, respectively. Also cleaves 5'-deoxyadenosine, a toxic by-product of radical S-adenosylmethionine (SAM) enzymes, into 5-deoxyribose and adenine. This Haemophilus ducreyi (strain 35000HP / ATCC 700724) protein is 5'-methylthioadenosine/S-adenosylhomocysteine nucleosidase.